A 166-amino-acid polypeptide reads, in one-letter code: Protein adg1 (166 aa).

Positions 1 to 22 (MFLRSIFQTLCAVSFLAGSVFA) are cleaved as a signal peptide.

Its subcellular location is the endoplasmic reticulum. This chain is Protein adg1 (adg1), found in Schizosaccharomyces pombe (strain 972 / ATCC 24843) (Fission yeast).